A 96-amino-acid chain; its full sequence is Plasminogen-like protein A (96 aa).

A signal peptide spans 1-19 (MEHKEVVLLLLLFLKSGQG). The PAN domain occupies 20–96 (EPLDDYVNAQ…RMRDVVLFEK (77 aa)). 2 disulfide bridges follow: cysteine 49–cysteine 73 and cysteine 53–cysteine 61.

In terms of tissue distribution, expressed in liver.

Its subcellular location is the secreted. In terms of biological role, may bind non-covalently to lysine binding sites present in the kringle structures of plasminogen. This may interfere with the binding of fibrin or alpha-2-antiplasmin to plasminogen and may result in the localization of activity at sites necessary for extracellular matrix destruction. The polypeptide is Plasminogen-like protein A (PLGLA) (Homo sapiens (Human)).